Consider the following 105-residue polypeptide: DNA-binding transcriptional regulator BolA (105 aa).

It belongs to the BolA/IbaG family.

Functionally, transcriptional regulator that plays an important role in general stress response. Has many effects on cell morphology, cell growth and cell division. Acts by regulating the transcription of many genes, including dacA (PBP-5), dacC (PBP-6), ampC and mreB. Probably involved in the coordination of genes that adapt the cell physiology in order to enhance cell adaptation and survival under stress conditions. Essential for normal cell morphology in stationary phase and under conditions of starvation. Also regulates a complex network of genes encoding proteins related to biofilm development, and negatively modulates flagellar biosynthesis and swimming capacity. Could be a motile/adhesive transcriptional switch, specifically involved in the transition between the planktonic and the attachment stage of biofilm formation. Overexpression produces round cell shape, impairs cell growth rate and induces biofilm development. The sequence is that of DNA-binding transcriptional regulator BolA from Escherichia coli (strain K12).